Reading from the N-terminus, the 340-residue chain is UDP-3-O-acylglucosamine N-acyltransferase (340 aa).

The active-site Proton acceptor is the His238.

The protein belongs to the transferase hexapeptide repeat family. LpxD subfamily. Homotrimer.

It carries out the reaction a UDP-3-O-[(3R)-3-hydroxyacyl]-alpha-D-glucosamine + a (3R)-hydroxyacyl-[ACP] = a UDP-2-N,3-O-bis[(3R)-3-hydroxyacyl]-alpha-D-glucosamine + holo-[ACP] + H(+). It functions in the pathway bacterial outer membrane biogenesis; LPS lipid A biosynthesis. Functionally, catalyzes the N-acylation of UDP-3-O-acylglucosamine using 3-hydroxyacyl-ACP as the acyl donor. Is involved in the biosynthesis of lipid A, a phosphorylated glycolipid that anchors the lipopolysaccharide to the outer membrane of the cell. This Psychromonas ingrahamii (strain DSM 17664 / CCUG 51855 / 37) protein is UDP-3-O-acylglucosamine N-acyltransferase.